A 217-amino-acid polypeptide reads, in one-letter code: Large ribosomal subunit protein uL3 (217 aa).

Residues 127–162 are disordered; that stretch reads GFSRGPMSHGSKNHRAPGSTGAGTTPGRIYPGKRMA. A compositionally biased stretch (low complexity) spans 142 to 153; that stretch reads APGSTGAGTTPG.

This sequence belongs to the universal ribosomal protein uL3 family. Part of the 50S ribosomal subunit. Forms a cluster with proteins L14 and L19.

Functionally, one of the primary rRNA binding proteins, it binds directly near the 3'-end of the 23S rRNA, where it nucleates assembly of the 50S subunit. This is Large ribosomal subunit protein uL3 from Prochlorococcus marinus (strain MIT 9312).